The sequence spans 458 residues: V-type ATP synthase beta chain (458 aa).

This sequence belongs to the ATPase alpha/beta chains family.

Produces ATP from ADP in the presence of a proton gradient across the membrane. The V-type beta chain is a regulatory subunit. The protein is V-type ATP synthase beta chain of Enterococcus faecalis (strain ATCC 700802 / V583).